Here is a 632-residue protein sequence, read N- to C-terminus: Polygalacturonase non-catalytic subunit AroGP3 (632 aa).

The first 27 residues, 1-27 (MHTKILLPSCILLLLLFTLSSLDVVVA), serve as a signal peptide directing secretion. A propeptide spanning residues 28–109 (KDGDESGNPF…MCALDLLPSL (82 aa)) is cleaved from the precursor. Asn125, Asn143, Asn258, Asn280, Asn336, Asn371, and Asn389 each carry an N-linked (GlcNAc...) asparagine glycan. Positions 417–631 (FFREKMLKSG…FENDMTWATA (215 aa)) constitute a BURP domain.

Interacts with polygalacturonase to form heterodimers.

It localises to the secreted. It is found in the extracellular space. Its subcellular location is the apoplast. The protein localises to the cell wall. Non-catalytic subunit of polygalacturonase. The protein is Polygalacturonase non-catalytic subunit AroGP3 (GP3) of Solanum lycopersicum (Tomato).